The sequence spans 448 residues: uncharacterized protein (448 aa).

Lysine 297 is modified (N6-(pyridoxal phosphate)lysine).

Belongs to the class-III pyridoxal-phosphate-dependent aminotransferase family. Requires pyridoxal 5'-phosphate as cofactor.

This is an uncharacterized protein from Sinorhizobium fredii (strain NBRC 101917 / NGR234).